The primary structure comprises 681 residues: MSKKKKTYQNTLSEKEAKKVIAKLADEIRHHQYLYYVKNQPEISDFDFDQLFKRLRDLEEEFPQFKDLNSPTLVVGSDLDKDFEKFQHKLPVLSLINTYNDDELLDWVNKTDPDGLYSVEWKIDGASIVLYYENGMLKNGVTRGSGGIGDDVTDNIRTVRNIPLRLPEPITVYLRGEVFMTFKDFEEFNELSSGKYANPRNLSAGSIKQKNSADTAKRPLRIFTYDATFPGFTKKFKTHQQILSKLEKLTFPVPPDTVFVNGSKIAETIKDFKKKKDTLGFPTDGLVIKLNDISKRDAQGYTSHSPRWARAYKFDAIMKESRIVDITYAVGRTGKITPRVEIEPVNLAGTTVTFATLHNQDYIDELGVGIGAIVRVAKRGEIIPAVEEVITPGKDVFKIPDYCPSCKTKTIKKENLVDLFCPNPDCPDRVKNGIIFYCQRKQMDIEGLGDKQIEFLYDHGYIRSIADLYDLKDQKEKLMEEEGFGEKSLAIIFNGIEHSKQKDFRFLLPSIGLPELGHKVTELLIEHGIDSIDEILSIAKDKKRISSLLEIPGIGPSTIKAFEENFSDKRILKLIARLKNAGLKLKADPIKVSDQQPFAGQSWCVTGSFENFQPRDKAMDLVVYYGGRKVSAVSSKTTHLLAGPGAGSKLEKANELGIVVYNEKQFLDLLKSLKINFKNTI.

Residues 45 to 49 (DFDFD), 94 to 95 (SL), and Glu120 contribute to the NAD(+) site. Catalysis depends on Lys122, which acts as the N6-AMP-lysine intermediate. Residues Arg143, Glu177, Lys289, and Lys313 each coordinate NAD(+). The Zn(2+) site is built by Cys403, Cys406, Cys421, and Cys426. The 89-residue stretch at 593–681 (SDQQPFAGQS…SLKINFKNTI (89 aa)) folds into the BRCT domain.

The protein belongs to the NAD-dependent DNA ligase family. LigA subfamily. It depends on Mg(2+) as a cofactor. The cofactor is Mn(2+).

It carries out the reaction NAD(+) + (deoxyribonucleotide)n-3'-hydroxyl + 5'-phospho-(deoxyribonucleotide)m = (deoxyribonucleotide)n+m + AMP + beta-nicotinamide D-nucleotide.. DNA ligase that catalyzes the formation of phosphodiester linkages between 5'-phosphoryl and 3'-hydroxyl groups in double-stranded DNA using NAD as a coenzyme and as the energy source for the reaction. It is essential for DNA replication and repair of damaged DNA. This Leptospira borgpetersenii serovar Hardjo-bovis (strain JB197) protein is DNA ligase.